Reading from the N-terminus, the 513-residue chain is Serine/threonine-protein kinase PBL27 (513 aa).

Residues 1–61 (MSGCLPCFGS…KKELTAPKEG (61 aa)) are disordered. S-palmitoyl cysteine attachment occurs at residues Cys4 and Cys7. Composition is skewed to basic and acidic residues over residues 15 to 27 (AASK…ELSA) and 38 to 57 (ISLD…ELTA). Residues 83–360 (FRPECLLGEG…GDVVTALTYL (278 aa)) enclose the Protein kinase domain. ATP-binding positions include 89-97 (LGEGGFGRV) and Lys112. Asp210 acts as the Proton acceptor in catalysis. The residue at position 244 (Ser244) is a Phosphoserine; by CERK1. Residues Thr245 and Thr250 each carry the phosphothreonine; by CERK1 modification. Polar residues predominate over residues 365 to 378 (FDPNAPSGQNSRSG). The tract at residues 365-513 (FDPNAPSGQN…GPGSFDSTND (149 aa)) is disordered. Phosphoserine occurs at positions 392 and 401. Residues 417–428 (NSPDYRRRDMVR) are compositionally biased toward basic and acidic residues. Gly residues predominate over residues 434–446 (SEGGSETGGGSGR). Residues 456–473 (QESQRGSPASVGRSSRGT) are compositionally biased toward polar residues. A compositionally biased stretch (basic and acidic residues) spans 475–486 (RNRDLDRERAVA). The segment covering 504-513 (GPGSFDSTND) has biased composition (polar residues).

Belongs to the protein kinase superfamily. Ser/Thr protein kinase family. In terms of assembly, interacts with CERK1 (preferentially unphosphorylated) at the plasma membrane. Binds to MAPKKK5 at the plasma membrane; disassociation is induced by chitin perception by the CERK1 complex. Also associates with MAPKKK3. Phosphorylated by CERK1 upon elicitation by chitin. Post-translationally, palmitoylation at Cys-4 and Cys-7 are required for plasma membrane location.

The protein localises to the cell membrane. It carries out the reaction L-seryl-[protein] + ATP = O-phospho-L-seryl-[protein] + ADP + H(+). The catalysed reaction is L-threonyl-[protein] + ATP = O-phospho-L-threonyl-[protein] + ADP + H(+). Its function is as follows. Receptor-like cytoplasmic kinase involved in the transduction of signal between the host cell surface chitin receptor complex CERK1-LYK5 and the intracellular MAPKKK5-dependent mitogen-activated protein kinase (MAPK) cascade that leads to chitin-induced immunity. Phosphorylates and activates MAPKKK5 when phosphorylated by CERK1 after elicitation by chitin. The sequence is that of Serine/threonine-protein kinase PBL27 from Arabidopsis thaliana (Mouse-ear cress).